The chain runs to 540 residues: Glucose-6-phosphate isomerase (540 aa).

The Proton donor role is filled by Glu346. Residues His377 and Lys505 contribute to the active site.

The protein belongs to the GPI family.

The protein resides in the cytoplasm. It carries out the reaction alpha-D-glucose 6-phosphate = beta-D-fructose 6-phosphate. It participates in carbohydrate biosynthesis; gluconeogenesis. The protein operates within carbohydrate degradation; glycolysis; D-glyceraldehyde 3-phosphate and glycerone phosphate from D-glucose: step 2/4. Catalyzes the reversible isomerization of glucose-6-phosphate to fructose-6-phosphate. In Francisella tularensis subsp. holarctica (strain FTNF002-00 / FTA), this protein is Glucose-6-phosphate isomerase.